The chain runs to 67 residues: Conotoxin Cl14.2b (67 aa).

The signal sequence occupies residues 1–20; that stretch reads MNVTVMFLVLLLLTMPLTDG. Positions 21 to 48 are excised as a propeptide; the sequence is FNIRATNGGELFGPVQRDAGNVLDHGFQ.

It belongs to the conotoxin L superfamily. Contains 2 disulfide bonds. As to expression, expressed by the venom duct.

The protein resides in the secreted. Functionally, increases calcium current amplitude through Cav1.2/Cav1.3 channels in rat pancreatic beta-cells, which is a prerequisite for eliciting insulin secretion. Stimulates insulin secretion in NIT-1 insulinoma cell lines. In vivo, significantly decreases mice blood glucose levels as of 45 minutes after treatment, similarly to insulin treatment. Has a potential therapeutic use in endocrinal pathologies such as early stages of type 2 diabetes where the pancreas's capability to produce insulin is still effective. This is Conotoxin Cl14.2b from Californiconus californicus (California cone).